We begin with the raw amino-acid sequence, 505 residues long: Catalase (505 aa).

Residues histidine 56 and asparagine 129 contribute to the active site. Position 339 (tyrosine 339) interacts with heme.

Belongs to the catalase family. Heme is required as a cofactor.

Its subcellular location is the cytoplasm. It catalyses the reaction 2 H2O2 = O2 + 2 H2O. In terms of biological role, decomposes hydrogen peroxide into water and oxygen; serves to protect cells from the toxic effects of hydrogen peroxide. This Helicobacter pylori (strain ATCC 700392 / 26695) (Campylobacter pylori) protein is Catalase (katA).